Here is a 122-residue protein sequence, read N- to C-terminus: Serum amyloid A-1 protein (122 aa).

An N-terminal signal peptide occupies residues 1-19 (MKLLSGLLLCSLVLGVSSQ). The important for amyloid formation stretch occupies residues 20 to 45 (RWFSFIGEATQGAWDMWRAYSDMREA). Positions 87 to 122 (MGHGAEDSMADQAANEWGRSGKDPNHFRPKGLPDKY) are disordered. A compositionally biased stretch (basic and acidic residues) spans 105-122 (RSGKDPNHFRPKGLPDKY).

This sequence belongs to the SAA family. In terms of assembly, homohexamer; dimer of trimers. Can form amyloid fibrils after partial proteolysis; the native, undenatured protein does not form amyloid fibrils (in vitro). Apolipoprotein of the HDL complex. Binds to heparin. As to expression, detected in liver.

The protein resides in the secreted. In terms of biological role, major acute phase protein. The polypeptide is Serum amyloid A-1 protein (SAA1) (Oryctolagus cuniculus (Rabbit)).